The primary structure comprises 409 residues: MDASLSPFDHQKTQNTEPKKSFITSLITLRSNNIKEDTYFVSELKPTEQKSLQELKEKLSASSSKASSMWGVSLLGGDDKADVILLKFLRARDFKVADSLRMLEKCLEWREEFKAEKLTEEDLGFKDLEGKVAYMRGYDKEGHPVCYNAYGVFKEKEMYERVFGDEEKLNKFLRWRVQVLERGVKMLHFKPGGVNSIIQVTDLKDMPKRELRVASNQILSLFQDNYPELVATKIFINVPWYFSVIYSMFSPFLTQRTKSKFVMSKEGNAAETLYKFIRPEDIPVQYGGLSRPTDSQNGPPKPASEFSIKGGEKVNIQIEGIEGGATITWDIVVGGWDLEYSAEFVPNAEESYAIVVEKPKKMKATDEAVCNSFTTVEAGKLILSVDNTLSRKKKVAAYRYTVRKSTTTV.

Positions glutamate 116–aspartate 294 constitute a CRAL-TRIO domain. Residues alanine 270 to lysine 404 enclose the GOLD domain.

It belongs to the patellin family.

It localises to the membrane. The protein localises to the cytoplasm. Its function is as follows. Carrier protein that may be involved in membrane-trafficking events associated with cell-plate formation during cytokinesis. Binds to some hydrophobic molecules such as phosphoinositides and promotes their transfer between the different cellular sites. This is Patellin-6 (PATL6) from Arabidopsis thaliana (Mouse-ear cress).